Here is a 445-residue protein sequence, read N- to C-terminus: NADH-quinone oxidoreductase subunit F (445 aa).

NAD(+) is bound at residue 61 to 70; it reads GRGGAGFSTG. 174–221 contacts FMN; the sequence is GAGRYICGEETALINSLEGRRANPRSKPPFPATSGAWGKPTCVNNVET. [4Fe-4S] cluster is bound by residues Cys-351, Cys-354, Cys-357, and Cys-398.

Belongs to the complex I 51 kDa subunit family. In terms of assembly, composed of 13 different subunits. Subunits NuoCD, E, F, and G constitute the peripheral sector of the complex. FMN is required as a cofactor. It depends on [4Fe-4S] cluster as a cofactor.

The catalysed reaction is a quinone + NADH + 5 H(+)(in) = a quinol + NAD(+) + 4 H(+)(out). NDH-1 shuttles electrons from NADH, via FMN and iron-sulfur (Fe-S) centers, to quinones in the respiratory chain. The immediate electron acceptor for the enzyme in this species is believed to be ubiquinone. Couples the redox reaction to proton translocation (for every two electrons transferred, four hydrogen ions are translocated across the cytoplasmic membrane), and thus conserves the redox energy in a proton gradient. The chain is NADH-quinone oxidoreductase subunit F (nuoF) from Escherichia coli (strain K12).